The following is a 262-amino-acid chain: Cytochrome c oxidase subunit 3 (262 aa).

The next 7 helical transmembrane spans lie at 16–36 (PWPLTGAIGAMTTVTGLVQWF), 42–59 (TLFLLGNIITMLTMYQWW), 83–103 (GMILFIISEVFFFISFFWAFF), 128–148 (FQIPLLNTAILLASGVTVTWA), 163–183 (SLFFTVLLGIYFSILQAYEYI), 198–218 (FFVATGFHGLHVLIGTSFLLI), and 240–260 (AWYWHFVDVVWLFLYISIYWW).

It belongs to the cytochrome c oxidase subunit 3 family. In terms of assembly, component of the cytochrome c oxidase (complex IV, CIV), a multisubunit enzyme composed of a catalytic core of 3 subunits and several supernumerary subunits. The complex exists as a monomer or a dimer and forms supercomplexes (SCs) in the inner mitochondrial membrane with ubiquinol-cytochrome c oxidoreductase (cytochrome b-c1 complex, complex III, CIII).

It is found in the mitochondrion inner membrane. It carries out the reaction 4 Fe(II)-[cytochrome c] + O2 + 8 H(+)(in) = 4 Fe(III)-[cytochrome c] + 2 H2O + 4 H(+)(out). Component of the cytochrome c oxidase, the last enzyme in the mitochondrial electron transport chain which drives oxidative phosphorylation. The respiratory chain contains 3 multisubunit complexes succinate dehydrogenase (complex II, CII), ubiquinol-cytochrome c oxidoreductase (cytochrome b-c1 complex, complex III, CIII) and cytochrome c oxidase (complex IV, CIV), that cooperate to transfer electrons derived from NADH and succinate to molecular oxygen, creating an electrochemical gradient over the inner membrane that drives transmembrane transport and the ATP synthase. Cytochrome c oxidase is the component of the respiratory chain that catalyzes the reduction of oxygen to water. Electrons originating from reduced cytochrome c in the intermembrane space (IMS) are transferred via the dinuclear copper A center (CU(A)) of subunit 2 and heme A of subunit 1 to the active site in subunit 1, a binuclear center (BNC) formed by heme A3 and copper B (CU(B)). The BNC reduces molecular oxygen to 2 water molecules using 4 electrons from cytochrome c in the IMS and 4 protons from the mitochondrial matrix. The polypeptide is Cytochrome c oxidase subunit 3 (Aedes aegypti (Yellowfever mosquito)).